The chain runs to 86 residues: Large ribosomal subunit protein bL27 (86 aa).

The segment at 1-24 (MAHKKGTGSTRNGRDSNSKRLGVK) is disordered.

This sequence belongs to the bacterial ribosomal protein bL27 family.

The protein is Large ribosomal subunit protein bL27 of Prochlorococcus marinus (strain AS9601).